Consider the following 107-residue polypeptide: Putative double-stranded DNA mimic protein Asuc_1259 (107 aa).

This sequence belongs to the putative dsDNA mimic protein family.

In terms of biological role, may act as a double-stranded DNA (dsDNA) mimic. Probably regulates the activity of a dsDNA-binding protein. The polypeptide is Putative double-stranded DNA mimic protein Asuc_1259 (Actinobacillus succinogenes (strain ATCC 55618 / DSM 22257 / CCUG 43843 / 130Z)).